Here is a 135-residue protein sequence, read N- to C-terminus: MRIIQTTGKRKTAIARAVIREGKGRVRINGKPVELVEPEIARFTILEPLILAGEEIWNSVDIDVKVQGGGFMGQAEAARIAIARALVEWTGDMNLKEKFIKYDRTMLVGDPRRTEPHKPNRSTKGPRAKRQKSYR.

Over residues 108 to 118 (VGDPRRTEPHK) the composition is skewed to basic and acidic residues. The tract at residues 108–135 (VGDPRRTEPHKPNRSTKGPRAKRQKSYR) is disordered. Basic residues predominate over residues 119–135 (PNRSTKGPRAKRQKSYR).

The protein belongs to the universal ribosomal protein uS9 family.

The polypeptide is Small ribosomal subunit protein uS9 (rps9) (Pyrococcus abyssi (strain GE5 / Orsay)).